A 190-amino-acid chain; its full sequence is Large ribosomal subunit protein uL5 (190 aa).

This sequence belongs to the universal ribosomal protein uL5 family. In terms of assembly, part of the 50S ribosomal subunit; contacts the 5S rRNA and probably tRNA. Forms a bridge to the 30S subunit in the 70S ribosome.

In terms of biological role, this is one of the proteins that bind and probably mediate the attachment of the 5S RNA into the large ribosomal subunit, where it forms part of the central protuberance. In the 70S ribosome it contacts protein S13 of the 30S subunit (bridge B1b), connecting the 2 subunits; this bridge is implicated in subunit movement. May contact the P site tRNA; the 5S rRNA and some of its associated proteins might help stabilize positioning of ribosome-bound tRNAs. The chain is Large ribosomal subunit protein uL5 from Methanocaldococcus jannaschii (strain ATCC 43067 / DSM 2661 / JAL-1 / JCM 10045 / NBRC 100440) (Methanococcus jannaschii).